A 434-amino-acid polypeptide reads, in one-letter code: Perilipin-3 (434 aa).

Positions 1-22 (MSADGAEADGSTQVTVEEPVQQ) are disordered. Residue serine 2 is modified to N-acetylserine. Phosphoserine is present on serine 31. Lysine 65 bears the N6-acetyllysine mark. Phosphoserine is present on serine 91. A Glycyl lysine isopeptide (Lys-Gly) (interchain with G-Cter in SUMO1) cross-link involves residue lysine 122. Phosphoserine is present on residues serine 130 and serine 148. Threonine 170 carries the phosphothreonine modification. Phosphoserine is present on residues serine 175 and serine 179. Threonine 216 is modified (phosphothreonine). 2 positions are modified to phosphoserine: serine 217 and serine 241. Tyrosine 251 carries the phosphotyrosine modification. Coiled coils occupy residues 252 to 280 (EHSL…SLME) and 353 to 377 (TNVK…SSIH).

Belongs to the perilipin family. As to quaternary structure, homooligomer. Interacts with M6PR (via the cytoplasmic domain). Interacts with IGF2R (via the cytoplasmic domain). In terms of processing, phosphorylation at Tyr-251 by isoform 1 of CHKA (CHKalpha2) promotes dissociation from lipid droplets: dissociation is followed by recruitment of autophagosome machinery to lipid droplets and subsequent lipid droplet lipolysis.

It is found in the lipid droplet. Its subcellular location is the endosome membrane. The protein localises to the cytoplasm. Structural component of lipid droplets, which is required for the formation and maintenance of lipid storage droplets. Required for the transport of mannose 6-phosphate receptors (MPR) from endosomes to the trans-Golgi network. In Pongo abelii (Sumatran orangutan), this protein is Perilipin-3 (PLIN3).